The sequence spans 50 residues: Large ribosomal subunit protein eL39 (50 aa).

Residues 1–12 (MGKKSKASKKRL) are compositionally biased toward basic residues. Disordered regions lie at residues 1–20 (MGKKSKASKKRLAKLERQNS) and 30–50 (TNRDVQRNPKRRNWRRNDTDE).

Belongs to the eukaryotic ribosomal protein eL39 family.

This Halobacterium salinarum (strain ATCC 700922 / JCM 11081 / NRC-1) (Halobacterium halobium) protein is Large ribosomal subunit protein eL39 (rpl39e).